The sequence spans 366 residues: D-alanine--D-alanine ligase (366 aa).

Residues 148-357 (KMTFEQAGLA…FPELVDRLIQ (210 aa)) enclose the ATP-grasp domain. 184-239 (EAALGYPAFVKPANLGSSVGIAKVRSRQELEAALDNAASYDRRLVVEAGVVAREVE) is an ATP binding site. Mg(2+)-binding residues include aspartate 310, glutamate 324, and asparagine 326.

Belongs to the D-alanine--D-alanine ligase family. The cofactor is Mg(2+). Requires Mn(2+) as cofactor.

The protein localises to the cytoplasm. The catalysed reaction is 2 D-alanine + ATP = D-alanyl-D-alanine + ADP + phosphate + H(+). It functions in the pathway cell wall biogenesis; peptidoglycan biosynthesis. In terms of biological role, cell wall formation. This chain is D-alanine--D-alanine ligase, found in Nostoc punctiforme (strain ATCC 29133 / PCC 73102).